We begin with the raw amino-acid sequence, 312 residues long: Pectinesterase inhibitor 10 (312 aa).

Positions 1-25 (MNILSQTQILHLSIAILLFITTSSS) are cleaved as a signal peptide. Composition is skewed to low complexity over residues 24 to 36 (SSSL…SPSL) and 44 to 55 (SPSSAPPSSLSP). Residues 24–141 (SSSLSPSSSS…PSSSSSTYSN (118 aa)) form a disordered region. The span at 56–75 (SSPPPLSLSPSSPPPPPPSS) shows a compositional bias: pro residues. 2 stretches are compositionally biased toward low complexity: residues 76–85 (SPLSSLSPSL) and 93–104 (SPSSAPPSSLSP). Residues 105–124 (SSPPPLSLSPSSPPPPPPSS) show a composition bias toward pro residues. Residues 125-137 (SPLSSLSPSSSSS) are compositionally biased toward low complexity. 4 N-linked (GlcNAc...) asparagine glycosylation sites follow: Asn-141, Asn-153, Asn-185, and Asn-200. A disulfide bond links Cys-152 and Cys-161. The cysteines at positions 218 and 268 are disulfide-linked.

The protein belongs to the PMEI family.

The protein resides in the secreted. The protein localises to the extracellular space. It localises to the apoplast. In terms of biological role, pectin methylesterase (PME) inhibitor involved in the maintenance of cell wall integrity in response to necrotrophic pathogens. Modulates PME activity and pectin methylesterification during infection by Botrytis cinerea and contributes to resistance against the pathogen. The chain is Pectinesterase inhibitor 10 from Arabidopsis thaliana (Mouse-ear cress).